Here is a 427-residue protein sequence, read N- to C-terminus: Dihydroorotase (427 aa).

Zn(2+) contacts are provided by H60 and H62. Residues 62–64 and N94 contribute to the substrate site; that span reads HLR. Positions 151, 178, and 231 each coordinate Zn(2+). N277 contacts substrate. Residue D304 coordinates Zn(2+). D304 is an active-site residue. Substrate-binding positions include H308 and 322 to 323; that span reads FG.

It belongs to the metallo-dependent hydrolases superfamily. DHOase family. Class I DHOase subfamily. Requires Zn(2+) as cofactor.

It carries out the reaction (S)-dihydroorotate + H2O = N-carbamoyl-L-aspartate + H(+). The protein operates within pyrimidine metabolism; UMP biosynthesis via de novo pathway; (S)-dihydroorotate from bicarbonate: step 3/3. Catalyzes the reversible cyclization of carbamoyl aspartate to dihydroorotate. The sequence is that of Dihydroorotase from Pelotomaculum thermopropionicum (strain DSM 13744 / JCM 10971 / SI).